A 256-amino-acid polypeptide reads, in one-letter code: MTSSERMAKVVLVDIEGTTTSISFVHDILFPYAKQNVEKFLRNSWEEDDIQHIVQDLQQVPQFADYKALLSAPPAEVDFELIAGFVRYLIDQDLKVTPMKTLQGLIWAQGYTNGELKGHVYEDVPTAFKAWRAAGLQIAVYSSGSVAAQKLIFGHSLVGNLQPYLSAYFDTHVGHKQEQQSYETIAKLLKEDPKHILFLTDIPGEAAAARSAGLQAIILQRPGNAALADDQKASFELIPDFKPLQNLKLPLNKYQA.

Positions 14 and 16 each coordinate Mg(2+). Substrate-binding positions include 142-143 (SS) and lysine 176. Aspartate 201 provides a ligand contact to Mg(2+).

It belongs to the HAD-like hydrolase superfamily. MasA/MtnC family. Monomer. The cofactor is Mg(2+).

It is found in the cytoplasm. Its subcellular location is the nucleus. It catalyses the reaction 5-methylsulfanyl-2,3-dioxopentyl phosphate + H2O = 1,2-dihydroxy-5-(methylsulfanyl)pent-1-en-3-one + phosphate. Its pathway is amino-acid biosynthesis; L-methionine biosynthesis via salvage pathway; L-methionine from S-methyl-5-thio-alpha-D-ribose 1-phosphate: step 3/6. It functions in the pathway amino-acid biosynthesis; L-methionine biosynthesis via salvage pathway; L-methionine from S-methyl-5-thio-alpha-D-ribose 1-phosphate: step 4/6. Bifunctional enzyme that catalyzes the enolization of 2,3-diketo-5-methylthiopentyl-1-phosphate (DK-MTP-1-P) into the intermediate 2-hydroxy-3-keto-5-methylthiopentenyl-1-phosphate (HK-MTPenyl-1-P), which is then dephosphorylated to form the acireductone 1,2-dihydroxy-3-keto-5-methylthiopentene (DHK-MTPene). The protein is Enolase-phosphatase E1 of Drosophila erecta (Fruit fly).